The primary structure comprises 1703 residues: Mediator of RNA polymerase II transcription subunit 14 (1703 aa).

The span at 755 to 766 (LSQTADLATSSA) shows a compositional bias: polar residues. The tract at residues 755 to 781 (LSQTADLATSSAGPLLRKDQKPRKRSA) is disordered.

The protein belongs to the Mediator complex subunit 14 family. Component of the Mediator complex. Interacts with CDKE-1, HDA19 and LUG. Interacts with PTAC12/HMR/PAP5 and PIF4. In terms of tissue distribution, expressed in roots, stems, developing embryos, young leaf primordia, shoot apical meristems, inflorescence meristems, tapetum in anthers, ovules and floral organ primordia, but not in mature organs.

The protein localises to the nucleus. Functionally, component of the Mediator complex, a coactivator involved in the regulated transcription of nearly all RNA polymerase II-dependent genes. Mediator functions as a bridge to convey information from gene-specific regulatory proteins to the basal RNA polymerase II transcription machinery. The Mediator complex, having a compact conformation in its free form, is recruited to promoters by direct interactions with regulatory proteins and serves for the assembly of a functional pre-initiation complex with RNA polymerase II and the general transcription factors. Binds to G-box (5'-CACGTG-3')-containing regions of target genes promoters (e.g. IAA29 and IAA19). Involved in defining the duration of cell proliferation. Element of a PIF4/HMR/MED14-dependent thermoresponsive process; required for thermomorphogenetic hypocotyl growth in response to daytime warm temperature elicitation by associating to the promoters of thermoresponsive growth-relevant genes (e.g. mainly involved in biosynthesis and signaling of the phytohormone auxin); this also process implies PIF4 and its transcriptional coactivator PTAC12/HMR/PAP5 to promote the expression of target genes. The polypeptide is Mediator of RNA polymerase II transcription subunit 14 (Arabidopsis thaliana (Mouse-ear cress)).